A 161-amino-acid polypeptide reads, in one-letter code: Regulator of ribonuclease activity A (161 aa).

The protein belongs to the RraA family. Homotrimer. Binds to both RNA-binding sites in the C-terminal region of Rne and to RhlB.

It localises to the cytoplasm. Globally modulates RNA abundance by binding to RNase E (Rne) and regulating its endonucleolytic activity. Can modulate Rne action in a substrate-dependent manner by altering the composition of the degradosome. Modulates RNA-binding and helicase activities of the degradosome. In Yersinia pseudotuberculosis serotype O:1b (strain IP 31758), this protein is Regulator of ribonuclease activity A.